The following is a 223-amino-acid chain: Deoxyribose-phosphate aldolase (223 aa).

Catalysis depends on aspartate 91, which acts as the Proton donor/acceptor. Lysine 153 acts as the Schiff-base intermediate with acetaldehyde in catalysis. The Proton donor/acceptor role is filled by lysine 182.

Belongs to the DeoC/FbaB aldolase family. DeoC type 1 subfamily.

It localises to the cytoplasm. It catalyses the reaction 2-deoxy-D-ribose 5-phosphate = D-glyceraldehyde 3-phosphate + acetaldehyde. Its pathway is carbohydrate degradation; 2-deoxy-D-ribose 1-phosphate degradation; D-glyceraldehyde 3-phosphate and acetaldehyde from 2-deoxy-alpha-D-ribose 1-phosphate: step 2/2. Its function is as follows. Catalyzes a reversible aldol reaction between acetaldehyde and D-glyceraldehyde 3-phosphate to generate 2-deoxy-D-ribose 5-phosphate. The protein is Deoxyribose-phosphate aldolase of Streptococcus pyogenes serotype M3 (strain ATCC BAA-595 / MGAS315).